The chain runs to 92 residues: Putative regulatory protein Tpet_0986 (92 aa).

This sequence belongs to the RemA family.

In Thermotoga petrophila (strain ATCC BAA-488 / DSM 13995 / JCM 10881 / RKU-1), this protein is Putative regulatory protein Tpet_0986.